The primary structure comprises 621 residues: MFDQLAVFTPQGQVLYQYNCLGKKFSEIQINSFISQLITSPVTRKESVANANTDGFDFNLLTINSEHKNSPSFNALFYLNKQPELYFVVTFAEQTLELNQETQQTLALVLKLWNSLHLSESILKNRQGQNEKNKHNYVDILQGIEDDLKKFEQYFRIKYEESIKQDHINPDNFTKNGSVPQSHNKNTKKKLRDTKGKKQSTGNVGSGRKWGRDGGMLDEMNHEDAAKLDFSSSNSHNSSQVALDSTINKDSFGDRTEGGDFLIKEIDDLLSSHKDEITSGNEAKNSGYVSTAFGFLQKHVLGNKTINESDLKSVLEKLTQQLITKNVAPEAADYLTQQVSHDLVGSKTANWTSVENTARESLTKALTQILTPGVSVDLLREIQSKRSKKDEEGKCDPYVFSIVGVNGVGKSTNLSKLAFWLLQNNFKVLIVACDTFRSGAVEQLRVHVENLAQLMDDSHVRGSKNKRGKTGNDYVELFEAGYGGSDLVTKIAKQAIKYSRDQNFDIVLMDTAGRRHNDPTLMSPLKSFADQAKPDKIIMVGEALVGTDSVQQAKNFNDAFGKGRNLDFFIISKCDTVGEMLGTMVNMVYATGIPILFVGVGQTYTDLRTLSVKWAVNTLMS.

The tract at residues 1–158 is SRX; the sequence is MFDQLAVFTP…KKFEQYFRIK (158 aa). Residues 167-217 are disordered; that stretch reads HINPDNFTKNGSVPQSHNKNTKKKLRDTKGKKQSTGNVGSGRKWGRDGGML. The segment covering 171-183 has biased composition (polar residues); sequence DNFTKNGSVPQSH. Residues 185 to 198 show a composition bias toward basic residues; that stretch reads KNTKKKLRDTKGKK. Ser-239 carries the phosphoserine modification. The interval 398 to 620 is NG domain; that stretch reads YVFSIVGVNG…SVKWAVNTLM (223 aa). Residues 404-411 and 510-514 contribute to the GTP site; these read GVNGVGKS and DTAGR. Position 523 is a phosphoserine (Ser-523). 572–575 lines the GTP pocket; it reads SKCD.

It belongs to the GTP-binding SRP family. As to quaternary structure, heterodimer of an alpha and a beta chain.

It is found in the endoplasmic reticulum membrane. Its function is as follows. Component of the SRP (signal recognition particle) receptor (SR). Ensures, in conjunction with the signal recognition particle, the correct targeting of the nascent secretory proteins to the endoplasmic reticulum membrane system. GTP hydrolysis may enhance the fidelity of and provide unidirectionality to the targeting reaction. It is important but not essential for cell growth. May be directly involved in mitochondrial protein import. This Saccharomyces cerevisiae (strain ATCC 204508 / S288c) (Baker's yeast) protein is Signal recognition particle receptor subunit alpha homolog (SRP101).